The primary structure comprises 211 residues: Pyridoxine/pyridoxamine 5'-phosphate oxidase (211 aa).

Substrate is bound by residues 7-10 and lysine 65; that span reads RREY. FMN is bound by residues 60–65, 75–76, arginine 81, lysine 82, and glutamine 104; these read RIVLLK and YT. Substrate contacts are provided by tyrosine 122, arginine 126, and serine 130. Residues 139–140 and tryptophan 184 contribute to the FMN site; that span reads QS. Residue 190–192 coordinates substrate; it reads RLH. Arginine 194 provides a ligand contact to FMN.

The protein belongs to the pyridoxamine 5'-phosphate oxidase family. Homodimer. FMN is required as a cofactor.

It carries out the reaction pyridoxamine 5'-phosphate + O2 + H2O = pyridoxal 5'-phosphate + H2O2 + NH4(+). The catalysed reaction is pyridoxine 5'-phosphate + O2 = pyridoxal 5'-phosphate + H2O2. It participates in cofactor metabolism; pyridoxal 5'-phosphate salvage; pyridoxal 5'-phosphate from pyridoxamine 5'-phosphate: step 1/1. The protein operates within cofactor metabolism; pyridoxal 5'-phosphate salvage; pyridoxal 5'-phosphate from pyridoxine 5'-phosphate: step 1/1. Functionally, catalyzes the oxidation of either pyridoxine 5'-phosphate (PNP) or pyridoxamine 5'-phosphate (PMP) into pyridoxal 5'-phosphate (PLP). This is Pyridoxine/pyridoxamine 5'-phosphate oxidase from Vibrio cholerae serotype O1 (strain ATCC 39541 / Classical Ogawa 395 / O395).